The primary structure comprises 1760 residues: MAAPAQAVVKEKPPIHVYPQAKIGTKIFTHHGIHSMRYNGVCALTGSTVLMASGRFVMFVDVHKGTIESMQGPENGGVGAVAVHPSRQYYVVCERKPSDPAIRAYSWPSRTEVGEFVKGATKGFSACAFNKDGSMMATVGMYPDFFLTVWDWESRGMVLRSKCHNTDVYTVLFSPFDSGLLVSGGAGHIKFWTMANTFTGLKLQGLLGKFGRLEISNVSGFVVLSDGKVISGSESGLIILWEGDLIRCCFAREVDREDDDGTAATFMARSYDYTPCHEGAINVVELMEGGRVLMTAGDDGYFRFWRVSELEVAEGEGAPPLYVPECLGEILVHAGAFIRSVTYCKDVDEWVVLDSAGVLWRVPYVHPDDILNNAVTKPKEQAVPALEFNGGSITSAALSPIDHTVVTGGEDGTIRLVDYVTPRELYKMCLPQPNVVIGLRFFQKDPEKKKFLACCKSGAVLLVKRGSTAFTLLGQWRPHNDGLALFAVDAAEHRLCTIAHGTVFFFTILDDFSSLEPIGFCKIPLPGATCVAWDDASSCCLIGFECGKLLAIRAPTRDMVDQSVSYEFTCNYALVGIRQRKKVEKKQANVSAGEREGFVEEEEEEEYLGPWPVRLICPMADGDFAIGAGGVELLYKYGLHVRYEGQKELPPLPPTGIEPPDYVEEPLMNLCYRDYTPEASSMSYSGRYLVVICEGSQMLLRQLDEMGRVRLEPILVASAHDRLDGPIAAACTSFDDKMLVSVGSDGLVVAQLLDGCIAPQPPSPVAQLQPLRAEEIVEPQLAPFSITEQKDLDDRRRAEDEKRRELNLFLDKLKDVHQKYARLLRENQSLALTHRLSKEEITIHPQIYRELQEEMRQRVEESRKPTALELARENIRTRKMRNRFVDNLAHDRFLVRSFSKEFSVASFRTPYVDGSIKLFQQQIDELLGSERCSSLACDGDRGIVSVASGEASQQSPRNLSLSTAAGVVRWLNSEERKRNEGEQQKMNAAHREAEILTTTMRQYLNKMDERREERHWRKKGYEMLLAHKPDPAVEEASLNEELRRETRRRGECILRTDPSYHSAPSAVIKLQQLIRLEEIIFNMRNNFSNELLKLRDEKERLCGTLNVSLQRIRAINEKLKDKSFHADDVKLTPEEMPGKRFEISRDGLVAFMKQRQEEKLREQTAKKAQRGFGADLATGEPATNTDTSGADTPATRRSEGEDSRKVTISANRDSFGTAAARTRSVRTGTLAASKGGRPFSGGGFAAGAARERMNHELRVKHENIKLTEMEEEELQIERNRLLAERQRLHTQVQAMMDEFDVRLWSMYEERSRVDANLCLAHTHSLLLFREYNILLVFRQKDFELQSSYDEARNSRDRCLREMEELQRLVQDQTASIEKLQEANKVFRREVEIFISNSFPAEHVPYITKVFLRQIKRRKHHSDMSGNDDDITSDDDDDDDMGEDEAWEEICPPNCSEERWCEVIEKREVRLDYVDAITEERRQLEATEQRIEEHKALADKNNAAVSTCLKAIEDFQGEKRKQLNMLETLVAMRCGQVRCLDEEGRCPDTFRRNDLVVVSDKVITGLHDRIRALAEEKHDRRGKLKSMVAEQQALQRERSEKQALHTQWEEKIYEAMLLKFGQIVNLEVLESSCGSREVEQLKERLRLEELSWEKELRKRDKKIAVLREKLHESLEYNTSLLQTIGDQESDRQSVERSLAQSTQKVVSKMYDSINVATEEDRSNLRLLIAAQQEEIDALRTEVALLRTKGGHVYAAAMAAGR.

WD repeat units lie at residues 119–160 (GATK…MVLR), 163–202 (CHNT…TGLK), 213–251 (LEIS…CCFA), 276–315 (CHEG…VAEG), and 388–427 (FNGG…ELYK). A compositionally biased stretch (basic and acidic residues) spans 1155–1165 (RQEEKLREQTA). The segment at 1155-1224 (RQEEKLREQT…FGTAAARTRS (70 aa)) is disordered. Over residues 1181 to 1190 (PATNTDTSGA) the composition is skewed to polar residues. Over residues 1194–1205 (ATRRSEGEDSRK) the composition is skewed to basic and acidic residues. The stretch at 1348–1389 (YDEARNSRDRCLREMEELQRLVQDQTASIEKLQEANKVFRRE) forms a coiled coil. Positions 1420 to 1444 (HSDMSGNDDDITSDDDDDDDMGEDE) are disordered. Residues 1425–1444 (GNDDDITSDDDDDDDMGEDE) show a composition bias toward acidic residues.

It belongs to the CFAP44 family.

It is found in the cell projection. The protein resides in the cilium. It localises to the flagellum. Its subcellular location is the cytoplasm. The protein localises to the cytoskeleton. It is found in the flagellum axoneme. Flagellar protein involved in flagellum axoneme organization and function. This chain is Cilia- and flagella-associated protein 44, found in Trypanosoma brucei brucei (strain 927/4 GUTat10.1).